The chain runs to 393 residues: Selenide, water dikinase (393 aa).

The segment at 1–21 (MSEKEGKVIPETNGMKRPRFD) is disordered. Residue C42 is part of the active site. ATP contacts are provided by residues K45, 68–70 (GMD), D93, D116, and 167–170 (GGQT). D70 is a binding site for Mg(2+). Position 116 (D116) interacts with Mg(2+). Position 273 (D273) interacts with Mg(2+).

This sequence belongs to the selenophosphate synthase 1 family. Class I subfamily. As to quaternary structure, homodimer. The cofactor is Mg(2+).

The catalysed reaction is hydrogenselenide + ATP + H2O = selenophosphate + AMP + phosphate + 2 H(+). Functionally, synthesizes selenophosphate from selenide and ATP. In Trypanosoma brucei brucei (strain 927/4 GUTat10.1), this protein is Selenide, water dikinase.